A 276-amino-acid chain; its full sequence is Large ribosomal subunit protein uL2 (276 aa).

Disordered stretches follow at residues 1–50 (MPIK…GRVT) and 206–276 (GKAG…SKKR). Positions 7–19 (RPTTPTRRFQTVV) are enriched in polar residues. The segment covering 20–38 (SREDITKQTPEKSLVESKK) has biased composition (basic and acidic residues).

The protein belongs to the universal ribosomal protein uL2 family. As to quaternary structure, part of the 50S ribosomal subunit. Forms a bridge to the 30S subunit in the 70S ribosome.

One of the primary rRNA binding proteins. Required for association of the 30S and 50S subunits to form the 70S ribosome, for tRNA binding and peptide bond formation. It has been suggested to have peptidyltransferase activity; this is somewhat controversial. Makes several contacts with the 16S rRNA in the 70S ribosome. This Solibacter usitatus (strain Ellin6076) protein is Large ribosomal subunit protein uL2.